The sequence spans 295 residues: Succinate dehydrogenase assembly factor 2, mitochondrial (295 aa).

3 disordered regions span residues 35-90 (AKDN…PELL), 208-227 (PEEG…RTGA), and 269-295 (TGFH…VFDS). Positions 45–75 (STPSTAPEYRQNQTSKPPNQFMPNSTSTMTN) are enriched in polar residues.

It belongs to the SDHAF2 family. As to quaternary structure, interacts with the flavoprotein subunit within the SDH catalytic dimer.

Its subcellular location is the mitochondrion matrix. Plays an essential role in the assembly of succinate dehydrogenase (SDH), an enzyme complex (also referred to as respiratory complex II) that is a component of both the tricarboxylic acid (TCA) cycle and the mitochondrial electron transport chain, and which couples the oxidation of succinate to fumarate with the reduction of ubiquinone (coenzyme Q) to ubiquinol. Required for flavinylation (covalent attachment of FAD) of the flavoprotein subunit of the SDH catalytic dimer. In Aspergillus terreus (strain NIH 2624 / FGSC A1156), this protein is Succinate dehydrogenase assembly factor 2, mitochondrial.